The chain runs to 242 residues: Small ribosomal subunit protein uS3 (242 aa).

The 71-residue stretch at 39-109 (IRQYVKATLA…QIRINVVEVT (71 aa)) folds into the KH type-2 domain. Positions 220 to 242 (KVNQPKRRQQKRRQQYDDRSNEG) are disordered. A compositionally biased stretch (basic residues) spans 223-232 (QPKRRQQKRR). A compositionally biased stretch (basic and acidic residues) spans 233–242 (QQYDDRSNEG).

It belongs to the universal ribosomal protein uS3 family. In terms of assembly, part of the 30S ribosomal subunit. Forms a tight complex with proteins S10 and S14.

Binds the lower part of the 30S subunit head. Binds mRNA in the 70S ribosome, positioning it for translation. The protein is Small ribosomal subunit protein uS3 of Trichodesmium erythraeum (strain IMS101).